The primary structure comprises 142 residues: Large ribosomal subunit protein bL17 (142 aa).

The protein belongs to the bacterial ribosomal protein bL17 family. Part of the 50S ribosomal subunit. Contacts protein L32.

This Rickettsia bellii (strain OSU 85-389) protein is Large ribosomal subunit protein bL17.